Here is a 126-residue protein sequence, read N- to C-terminus: Profilin-1B (126 aa).

An actin binding region spans residues 2 to 36 (SWQTYVDTNLVGTGAVTQAAILGLDGNTWATSAGF). Position 104 is an N6,N6,N6-trimethyllysine (Lys104).

The protein belongs to the profilin family. In terms of assembly, occurs in many kinds of cells as a complex with monomeric actin in a 1:1 ratio.

The protein localises to the cytoplasm. It is found in the cytoskeleton. Functionally, binds to actin and affects the structure of the cytoskeleton. At high concentrations, profilin prevents the polymerization of actin, whereas it enhances it at low concentrations. By binding to PIP2, it inhibits the formation of IP3 and DG. The protein is Profilin-1B of Acanthamoeba castellanii (Amoeba).